The sequence spans 257 residues: Phosphate import ATP-binding protein PstB (257 aa).

In terms of domain architecture, ABC transporter spans Phe-11 to Val-252. Gly-43–Ser-50 contacts ATP.

The protein belongs to the ABC transporter superfamily. Phosphate importer (TC 3.A.1.7) family. As to quaternary structure, the complex is composed of two ATP-binding proteins (PstB), two transmembrane proteins (PstC and PstA) and a solute-binding protein (PstS).

It is found in the cell membrane. It catalyses the reaction phosphate(out) + ATP + H2O = ADP + 2 phosphate(in) + H(+). In terms of biological role, part of the ABC transporter complex PstSACB involved in phosphate import. Responsible for energy coupling to the transport system. This chain is Phosphate import ATP-binding protein PstB, found in Saccharolobus solfataricus (strain ATCC 35092 / DSM 1617 / JCM 11322 / P2) (Sulfolobus solfataricus).